Reading from the N-terminus, the 166-residue chain is MRKFSTYDLAQISLLACLIIVTGMFKIPTGIPGSEFQLSAPIAVAIAAVFGFKRYFLAGIIASLILFLLGIHSILNVEISIIFRLTVGLIIVLLGTSIPVLVVAGPIGTMVARLGLAFTLGTPFLPLFVLAIPGMVITAVSVYPITKMLYAINKKVAGDHHVRNVL.

5 helical membrane-spanning segments follow: residues 12-32 (ISLL…TGIP), 33-53 (GSEF…FGFK), 55-75 (YFLA…HSIL), 87-107 (VGLI…AGPI), and 117-137 (AFTL…GMVI).

It is found in the cell membrane. In terms of biological role, does not seem to be a permease of pimelate. Its role in biotin synthesis is not clear. The chain is Protein BioX (bioX) from Lysinibacillus sphaericus (Bacillus sphaericus).